The primary structure comprises 151 residues: Probable cGMP 3',5'-cyclic phosphodiesterase subunit delta (151 aa).

This sequence belongs to the PDE6D/unc-119 family. As to quaternary structure, interacts with Pde6.

The protein localises to the nucleus. It localises to the cytoplasm. This chain is Probable cGMP 3',5'-cyclic phosphodiesterase subunit delta, found in Drosophila mojavensis (Fruit fly).